An 875-amino-acid polypeptide reads, in one-letter code: DNA mismatch repair protein MutS (875 aa).

625 to 632 (GPNMGGKS) is a binding site for ATP.

This sequence belongs to the DNA mismatch repair MutS family.

Its function is as follows. This protein is involved in the repair of mismatches in DNA. It is possible that it carries out the mismatch recognition step. This protein has a weak ATPase activity. The protein is DNA mismatch repair protein MutS of Symbiobacterium thermophilum (strain DSM 24528 / JCM 14929 / IAM 14863 / T).